A 128-amino-acid polypeptide reads, in one-letter code: Large ribosomal subunit protein eL31 (128 aa).

It belongs to the eukaryotic ribosomal protein eL31 family.

The chain is Large ribosomal subunit protein eL31 (RpL31) from Drosophila virilis (Fruit fly).